We begin with the raw amino-acid sequence, 333 residues long: DNA primase small subunit PriS (333 aa).

Residues Asp96, Asp98, and Asp237 contribute to the active site.

The protein belongs to the eukaryotic-type primase small subunit family. As to quaternary structure, heterodimer of a small subunit (PriS) and a large subunit (PriL). It depends on Mg(2+) as a cofactor. Requires Mn(2+) as cofactor.

In terms of biological role, catalytic subunit of DNA primase, an RNA polymerase that catalyzes the synthesis of short RNA molecules used as primers for DNA polymerase during DNA replication. The small subunit contains the primase catalytic core and has DNA synthesis activity on its own. Binding to the large subunit stabilizes and modulates the activity, increasing the rate of DNA synthesis while decreasing the length of the DNA fragments, and conferring RNA synthesis capability. The DNA polymerase activity may enable DNA primase to also catalyze primer extension after primer synthesis. May also play a role in DNA repair. This chain is DNA primase small subunit PriS, found in Thermoplasma volcanium (strain ATCC 51530 / DSM 4299 / JCM 9571 / NBRC 15438 / GSS1).